A 387-amino-acid chain; its full sequence is Probable inactive shikimate kinase like 2, chloroplastic (387 aa).

The transit peptide at 1 to 71 (MAAFASGLAI…FNSFSCNCLS (71 aa)) directs the protein to the chloroplast. Residues 368–387 (NIKPPGWDPSSDTGPHPQFT) are disordered.

The protein belongs to the shikimate kinase family.

The protein localises to the plastid. Its subcellular location is the chloroplast. The chain is Probable inactive shikimate kinase like 2, chloroplastic (SKL2) from Arabidopsis thaliana (Mouse-ear cress).